Here is a 473-residue protein sequence, read N- to C-terminus: tRNA-2-methylthio-N(6)-dimethylallyladenosine synthase (473 aa).

Residues Met-1 to Asp-21 are disordered. An MTTase N-terminal domain is found at Arg-26–Gln-146. The [4Fe-4S] cluster site is built by Cys-35, Cys-71, Cys-109, Cys-187, Cys-191, and Cys-194. The 233-residue stretch at Arg-173–Glu-405 folds into the Radical SAM core domain. The region spanning Glu-408 to Glu-470 is the TRAM domain.

The protein belongs to the methylthiotransferase family. MiaB subfamily. As to quaternary structure, monomer. [4Fe-4S] cluster is required as a cofactor.

Its subcellular location is the cytoplasm. It catalyses the reaction N(6)-dimethylallyladenosine(37) in tRNA + (sulfur carrier)-SH + AH2 + 2 S-adenosyl-L-methionine = 2-methylsulfanyl-N(6)-dimethylallyladenosine(37) in tRNA + (sulfur carrier)-H + 5'-deoxyadenosine + L-methionine + A + S-adenosyl-L-homocysteine + 2 H(+). In terms of biological role, catalyzes the methylthiolation of N6-(dimethylallyl)adenosine (i(6)A), leading to the formation of 2-methylthio-N6-(dimethylallyl)adenosine (ms(2)i(6)A) at position 37 in tRNAs that read codons beginning with uridine. In Rhizobium johnstonii (strain DSM 114642 / LMG 32736 / 3841) (Rhizobium leguminosarum bv. viciae), this protein is tRNA-2-methylthio-N(6)-dimethylallyladenosine synthase.